The following is a 441-amino-acid chain: MSSGFFGDIQKIKYEGPDSTNPLAYRFYNPDEVVAGKRLEDHLRFAVAYWHSFAWPGGDPFGGQTFDRPWFPKAGGIDTMELAKLKADVAFEMFSLLGAPYFCFHDADVRPEGKDFSESAARLDEIADYFAGKMKQTGVKLLWGTANLFSHRRFMSGAATNPDPDVFAYAAATVKSCIDVTKRLKGENYVLWGGREGYETLLNTDLAREQEQAGRFLSLVVDYKHKIGFKGTILIEPKPQEPTKHQYDYDVATVYGFLKRFGLEKEVKLNIEQGHAILAGHSFEHELALANALGVFGSIDMNRNDYQSGWDTDQFPNNVPEMALAYYQILQAGGFKTGGTNFDAKLRRQSLDPQDLLIGHIGGMDACARGLKAAARMVEDKALSAPLAERYAGWNSAEGKAMLSGKRTLEDIAERVVKKKIEPQPRSGRQELLENIVNRYV.

Active-site residues include histidine 105 and aspartate 108. Mg(2+) contacts are provided by glutamate 236, glutamate 272, histidine 275, aspartate 300, aspartate 311, aspartate 313, and aspartate 343.

It belongs to the xylose isomerase family. Homotetramer. Mg(2+) is required as a cofactor.

It is found in the cytoplasm. The catalysed reaction is alpha-D-xylose = alpha-D-xylulofuranose. The chain is Xylose isomerase from Mesorhizobium japonicum (strain LMG 29417 / CECT 9101 / MAFF 303099) (Mesorhizobium loti (strain MAFF 303099)).